Reading from the N-terminus, the 131-residue chain is Small ribosomal subunit protein uS8 (131 aa).

This sequence belongs to the universal ribosomal protein uS8 family. In terms of assembly, part of the 30S ribosomal subunit. Contacts proteins S5 and S12.

Functionally, one of the primary rRNA binding proteins, it binds directly to 16S rRNA central domain where it helps coordinate assembly of the platform of the 30S subunit. The sequence is that of Small ribosomal subunit protein uS8 from Wolbachia pipientis subsp. Culex pipiens (strain wPip).